Reading from the N-terminus, the 1035-residue chain is Cell-division control histidine kinase PdhS (1035 aa).

An important for polar localization region spans residues 1–613 (MSGSYPFIDI…HADGSEEPVD (613 aa)). The interval 500 to 533 (QGLANTRAESETPVSETSSIEPVEPTPPVKTRSE) is disordered. The tract at residues 614-1035 (AHLNAIAWRG…VFPPTRVLAD (422 aa)) is interaction with DivK. In terms of domain architecture, PAS spans 659–730 (HVEELKTILD…YLHGLSGNGV (72 aa)). Positions 802–1031 (RISHEIRTPL…VVEIVFPPTR (230 aa)) constitute a Histidine kinase domain. A Phosphohistidine; by autocatalysis modification is found at His-805.

In terms of assembly, interacts with DivK.

It localises to the cytoplasm. It catalyses the reaction ATP + protein L-histidine = ADP + protein N-phospho-L-histidine.. Its function is as follows. Functions as a polar differentiation marker. Essential protein that, by localizing in the old pole of dividing cells, controls cell division and maturation, probably through control of DivK phosphorylation status and cellular distribution, which in turn regulates CtrA, a transcriptional regulator of the minB operon. The asymmetrical localization of this protein is probably required for cells to enter a new division cycle. The sequence is that of Cell-division control histidine kinase PdhS (pdhS) from Brucella ovis (strain ATCC 25840 / 63/290 / NCTC 10512).